The primary structure comprises 344 residues: Methionine import ATP-binding protein MetN (344 aa).

The ABC transporter domain occupies 2 to 241 (IKLEKISKIF…PQTQLAKEFI (240 aa)). ATP is bound at residue 38 to 45 (GASGAGKS).

It belongs to the ABC transporter superfamily. Methionine importer (TC 3.A.1.24) family. As to quaternary structure, the complex is composed of two ATP-binding proteins (MetN), two transmembrane proteins (MetI) and a solute-binding protein (MetQ).

It is found in the cell inner membrane. The catalysed reaction is L-methionine(out) + ATP + H2O = L-methionine(in) + ADP + phosphate + H(+). It carries out the reaction D-methionine(out) + ATP + H2O = D-methionine(in) + ADP + phosphate + H(+). Functionally, part of the ABC transporter complex MetNIQ involved in methionine import. Responsible for energy coupling to the transport system. The polypeptide is Methionine import ATP-binding protein MetN (Pasteurella multocida (strain Pm70)).